A 269-amino-acid polypeptide reads, in one-letter code: tRNA uridine(34) hydroxylase (269 aa).

In terms of domain architecture, Rhodanese spans Ser121–Gly214. Residue Cys174 is the Cysteine persulfide intermediate of the active site.

This sequence belongs to the TrhO family.

It catalyses the reaction uridine(34) in tRNA + AH2 + O2 = 5-hydroxyuridine(34) in tRNA + A + H2O. Catalyzes oxygen-dependent 5-hydroxyuridine (ho5U) modification at position 34 in tRNAs. In Wolbachia sp. subsp. Brugia malayi (strain TRS), this protein is tRNA uridine(34) hydroxylase.